The primary structure comprises 421 residues: Gamma-glutamyl phosphate reductase (421 aa).

The protein belongs to the gamma-glutamyl phosphate reductase family.

Its subcellular location is the cytoplasm. It catalyses the reaction L-glutamate 5-semialdehyde + phosphate + NADP(+) = L-glutamyl 5-phosphate + NADPH + H(+). It functions in the pathway amino-acid biosynthesis; L-proline biosynthesis; L-glutamate 5-semialdehyde from L-glutamate: step 2/2. In terms of biological role, catalyzes the NADPH-dependent reduction of L-glutamate 5-phosphate into L-glutamate 5-semialdehyde and phosphate. The product spontaneously undergoes cyclization to form 1-pyrroline-5-carboxylate. The protein is Gamma-glutamyl phosphate reductase of Dinoroseobacter shibae (strain DSM 16493 / NCIMB 14021 / DFL 12).